The primary structure comprises 306 residues: tRNA pseudouridine synthase B (306 aa).

Asp43 serves as the catalytic Nucleophile.

Belongs to the pseudouridine synthase TruB family. Type 1 subfamily.

It carries out the reaction uridine(55) in tRNA = pseudouridine(55) in tRNA. Its function is as follows. Responsible for synthesis of pseudouridine from uracil-55 in the psi GC loop of transfer RNAs. In Lacticaseibacillus casei (strain BL23) (Lactobacillus casei), this protein is tRNA pseudouridine synthase B.